Here is a 186-residue protein sequence, read N- to C-terminus: uncharacterized protein (186 aa).

The N-terminal stretch at 1–21 (MIHVKYIILGFIMVSSLNLYA) is a signal peptide.

This is an uncharacterized protein from Rickettsia conorii (strain ATCC VR-613 / Malish 7).